Reading from the N-terminus, the 630-residue chain is Ubiquitin-like modifier-activating enzyme ATG7 (630 aa).

The GXGXXG motif motif lies at Gly331–Gly336. Cys507 serves as the catalytic Glycyl thioester intermediate. Residues Ala591 to Ala630 form a homodimerization region.

This sequence belongs to the ATG7 family. As to quaternary structure, homodimer; homodimerization is required for ATP-binding. Interacts with ATG8 through a thioester bond between Cys-507 and the C-terminal 'Gly-116' of ATG8 and with ATG12 through a thioester bond between Cys-507 and the C-terminal 'Gly-186' of ATG12. Also interacts with ATG3.

The protein localises to the cytoplasm. Its subcellular location is the preautophagosomal structure. In terms of biological role, E1-like activating enzyme involved in the 2 ubiquitin-like systems required for cytoplasm to vacuole transport (Cvt) and autophagy. Activates ATG12 for its conjugation with ATG5 and ATG8 for its conjugation with phosphatidylethanolamine. Both systems are needed for the ATG8 association to Cvt vesicles and autophagosomes membranes. Autophagy is essential for maintenance of amino acid levels and protein synthesis under nitrogen starvation. Required for selective autophagic degradation of the nucleus (nucleophagy) as well as for mitophagy which contributes to regulate mitochondrial quantity and quality by eliminating the mitochondria to a basal level to fulfill cellular energy requirements and preventing excess ROS production. Plays a role in the regulation of filamentous growth and chronological longevity. This Saccharomyces cerevisiae (strain ATCC 204508 / S288c) (Baker's yeast) protein is Ubiquitin-like modifier-activating enzyme ATG7 (ATG7).